The sequence spans 64 residues: DNA-binding protein 7d (64 aa).

5 positions are modified to N6-methyllysine: Lys5, Lys7, Lys61, Lys63, and Lys64.

It belongs to the 7 kDa DNA-binding/endoribonuclease P2 family. As to quaternary structure, monomer.

The protein localises to the cytoplasm. Its function is as follows. Can constrain negative DNA supercoils. May be involved in maintaining the integrity of the genome at high temperature. Stimulates the Holliday junction cleavage activity of Hjc. The polypeptide is DNA-binding protein 7d (sso7d) (Saccharolobus solfataricus (strain ATCC 35092 / DSM 1617 / JCM 11322 / P2) (Sulfolobus solfataricus)).